A 135-amino-acid polypeptide reads, in one-letter code: L-ectoine synthase (135 aa).

This sequence belongs to the ectoine synthase family.

The enzyme catalyses (2S)-4-acetamido-2-aminobutanoate = L-ectoine + H2O. It functions in the pathway amine and polyamine biosynthesis; ectoine biosynthesis; L-ectoine from L-aspartate 4-semialdehyde: step 3/3. Catalyzes the circularization of gamma-N-acetyl-alpha,gamma-diaminobutyric acid (ADABA) to ectoine (1,4,5,6-tetrahydro-2-methyl-4-pyrimidine carboxylic acid), which is an excellent osmoprotectant. The protein is L-ectoine synthase of Hyphomonas neptunium (strain ATCC 15444).